Reading from the N-terminus, the 55-residue chain is Seripauperin-7 (55 aa).

The first 20 residues, 1–20 (MVKLTSIAAGVAAIAAGASA), serve as a signal peptide directing secretion.

It belongs to the SRP1/TIP1 family. Seripauperin subfamily.

This chain is Seripauperin-7 (PAU7), found in Saccharomyces cerevisiae (strain ATCC 204508 / S288c) (Baker's yeast).